The primary structure comprises 399 residues: Succinyl-diaminopimelate desuccinylase (399 aa).

Zn(2+) is bound at residue His-80. The active site involves Asp-82. Position 113 (Asp-113) interacts with Zn(2+). Glu-147 (proton acceptor) is an active-site residue. The Zn(2+) site is built by Glu-148, Glu-176, and His-366.

This sequence belongs to the peptidase M20A family. DapE subfamily. Homodimer. The cofactor is Zn(2+). It depends on Co(2+) as a cofactor.

It carries out the reaction N-succinyl-(2S,6S)-2,6-diaminopimelate + H2O = (2S,6S)-2,6-diaminopimelate + succinate. It participates in amino-acid biosynthesis; L-lysine biosynthesis via DAP pathway; LL-2,6-diaminopimelate from (S)-tetrahydrodipicolinate (succinylase route): step 3/3. In terms of biological role, catalyzes the hydrolysis of N-succinyl-L,L-diaminopimelic acid (SDAP), forming succinate and LL-2,6-diaminopimelate (DAP), an intermediate involved in the bacterial biosynthesis of lysine and meso-diaminopimelic acid, an essential component of bacterial cell walls. In Colwellia psychrerythraea (strain 34H / ATCC BAA-681) (Vibrio psychroerythus), this protein is Succinyl-diaminopimelate desuccinylase.